Reading from the N-terminus, the 467-residue chain is 5-phosphohydroxy-L-lysine phospho-lyase (467 aa).

Lys-278 carries the post-translational modification N6-(pyridoxal phosphate)lysine.

Belongs to the class-III pyridoxal-phosphate-dependent aminotransferase family. As to quaternary structure, homotetramer. It depends on pyridoxal 5'-phosphate as a cofactor.

It is found in the mitochondrion. It catalyses the reaction (5R)-5-phosphooxy-L-lysine + H2O = (S)-2-amino-6-oxohexanoate + NH4(+) + phosphate. Catalyzes the pyridoxal-phosphate-dependent breakdown of 5-phosphohydroxy-L-lysine, converting it to ammonia, inorganic phosphate and 2-aminoadipate semialdehyde. In Mus musculus (Mouse), this protein is 5-phosphohydroxy-L-lysine phospho-lyase (Phykpl).